The chain runs to 259 residues: Probable dihydroorotate dehydrogenase B (NAD(+)), electron transfer subunit (259 aa).

One can recognise an FAD-binding FR-type domain in the interval 1–89 (MLPLNATITQ…RGPFGKGFTL (89 aa)). The [2Fe-2S] cluster site is built by C211, C216, C219, and C229.

The protein belongs to the PyrK family. As to quaternary structure, heterotetramer of 2 PyrK and 2 PyrD type B subunits. Requires [2Fe-2S] cluster as cofactor. FAD is required as a cofactor.

It functions in the pathway pyrimidine metabolism; UMP biosynthesis via de novo pathway; orotate from (S)-dihydroorotate (NAD(+) route): step 1/1. In terms of biological role, responsible for channeling the electrons from the oxidation of dihydroorotate from the FMN redox center in the PyrD type B subunit to the ultimate electron acceptor NAD(+). This chain is Probable dihydroorotate dehydrogenase B (NAD(+)), electron transfer subunit, found in Methanosarcina mazei (strain ATCC BAA-159 / DSM 3647 / Goe1 / Go1 / JCM 11833 / OCM 88) (Methanosarcina frisia).